The primary structure comprises 571 residues: FAD-linked oxidoreductase patO (571 aa).

Positions 1–23 (MRLHQSPPRLLVCILSVLQVSAG) are cleaved as a signal peptide. 10 N-linked (GlcNAc...) asparagine glycosylation sites follow: Asn47, Asn101, Asn125, Asn179, Asn341, Asn374, Asn380, Asn421, Asn445, and Asn480. An FAD-binding PCMH-type domain is found at 115 to 294 (TLGAMVRYAV…YAVTVKTFPD (180 aa)).

Belongs to the oxygen-dependent FAD-linked oxidoreductase family. FAD serves as cofactor.

It localises to the vacuole lumen. It participates in mycotoxin biosynthesis; patulin biosynthesis. Its function is as follows. FAD-linked oxidoreductase; part of the gene cluster that mediates the biosynthesis of patulin, an acetate-derived tetraketide mycotoxin produced by several fungal species that shows antimicrobial properties against several bacteria. PatO acts with patJ in the vacuole to convert gentisyl alcohol to isoepoxydon. The pathway begins with the synthesis of 6-methylsalicylic acid by the polyketide synthase (PKS) patK via condensation of acetate and malonate units. The 6-methylsalicylic acid decarboxylase patG then catalyzes the decarboxylation of 6-methylsalicylic acid to yield m-cresol (also known as 3-methylphenol). These first reactions occur in the cytosol. The intermediate m-cresol is then transported into the endoplasmic reticulum where the cytochrome P450 monooxygenase patH converts it to m-hydroxybenzyl alcohol, which is further converted to gentisyl alcohol by the cytochrome P450 monooxygenase patI. The oxidoreductases patJ and patO further convert gentisyl alcohol to isoepoxydon in the vacuole. PatN catalyzes then the transformation of isoepoxydon into phyllostine. The cluster protein patF is responsible for the conversion from phyllostine to neopatulin whereas the alcohol dehydrogenase patD converts neopatulin to E-ascladiol. The steps between isoepoxydon and E-ascladiol occur in the cytosol, and E-ascladiol is probably secreted to the extracellular space by one of the cluster-specific transporters patC or patM. Finally, the secreted patulin synthase patE catalyzes the conversion of E-ascladiol to patulin. The sequence is that of FAD-linked oxidoreductase patO from Penicillium expansum (Blue mold rot fungus).